A 296-amino-acid polypeptide reads, in one-letter code: Cytidine deaminase (296 aa).

CMP/dCMP-type deaminase domains follow at residues 47–167 (ELNE…FGPS) and 186–296 (DSND…VEPE). 88 to 90 (NIE) is a substrate binding site. His-101 provides a ligand contact to Zn(2+). The active-site Proton donor is the Glu-103. The Zn(2+) site is built by Cys-128 and Cys-131.

It belongs to the cytidine and deoxycytidylate deaminase family. In terms of assembly, homodimer. It depends on Zn(2+) as a cofactor.

The catalysed reaction is cytidine + H2O + H(+) = uridine + NH4(+). It carries out the reaction 2'-deoxycytidine + H2O + H(+) = 2'-deoxyuridine + NH4(+). Its function is as follows. This enzyme scavenges exogenous and endogenous cytidine and 2'-deoxycytidine for UMP synthesis. The sequence is that of Cytidine deaminase from Shewanella pealeana (strain ATCC 700345 / ANG-SQ1).